Here is a 538-residue protein sequence, read N- to C-terminus: Probable bifunctional tRNA threonylcarbamoyladenosine biosynthesis protein (538 aa).

Residues 1-327 (MIVLICLGIE…FRTDEVEAPW (327 aa)) form a kae1 region. 3 residues coordinate Fe cation: His111, His115, and Tyr132. L-threonylcarbamoyladenylate-binding positions include 132–136 (YVSGG), Asp164, Gly177, Glu181, and Asn260. Residue Asp288 coordinates Fe cation. The region spanning 336 to 538 (KLPDNLIAKG…EIESRGRYTH (203 aa)) is the Protein kinase domain. ATP-binding positions include 342–350 (IAKGAESDI) and Lys363. The Proton acceptor; for kinase activity role is filled by Asp452.

The protein in the N-terminal section; belongs to the KAE1 / TsaD family. This sequence in the C-terminal section; belongs to the protein kinase superfamily. Tyr protein kinase family. BUD32 subfamily. As to quaternary structure, component of the KEOPS complex that consists of Kae1, Bud32, Cgi121 and Pcc1; the whole complex dimerizes. Fe(2+) serves as cofactor.

The protein resides in the cytoplasm. The enzyme catalyses L-seryl-[protein] + ATP = O-phospho-L-seryl-[protein] + ADP + H(+). It carries out the reaction L-threonyl-[protein] + ATP = O-phospho-L-threonyl-[protein] + ADP + H(+). The catalysed reaction is L-threonylcarbamoyladenylate + adenosine(37) in tRNA = N(6)-L-threonylcarbamoyladenosine(37) in tRNA + AMP + H(+). In terms of biological role, required for the formation of a threonylcarbamoyl group on adenosine at position 37 (t(6)A37) in tRNAs that read codons beginning with adenine. Is a component of the KEOPS complex that is probably involved in the transfer of the threonylcarbamoyl moiety of threonylcarbamoyl-AMP (TC-AMP) to the N6 group of A37. The Kae1 domain likely plays a direct catalytic role in this reaction. The Bud32 domain probably displays kinase activity that regulates Kae1 function. The protein is Probable bifunctional tRNA threonylcarbamoyladenosine biosynthesis protein of Methanobrevibacter smithii (strain ATCC 35061 / DSM 861 / OCM 144 / PS).